Reading from the N-terminus, the 304-residue chain is Deoxyribonuclease-1-like 1 (304 aa).

Positions 1–24 (MPYMAMHGLTVALLLIFLAGGTEA) are cleaved as a signal peptide. N-linked (GlcNAc...) asparagine glycosylation occurs at N92. The active site involves E103. N123 is a glycosylation site (N-linked (GlcNAc...) asparagine). H154 is a catalytic residue. Cysteines 193 and 230 form a disulfide. N-linked (GlcNAc...) asparagine glycosylation occurs at N229.

The protein belongs to the DNase I family.

The protein resides in the endoplasmic reticulum. The sequence is that of Deoxyribonuclease-1-like 1 (DNASE1L1) from Cricetulus griseus (Chinese hamster).